We begin with the raw amino-acid sequence, 469 residues long: Type II secretion system protein HxcR (469 aa).

246–253 (GPTGSGKT) contributes to the ATP binding site.

It belongs to the GSP E family.

Its subcellular location is the cytoplasm. It carries out the reaction ATP + H2O + cellular proteinSide 1 = ADP + phosphate + cellular proteinSide 2.. In terms of biological role, ATPase component of the type II secretion system required for the energy-dependent secretion of extracellular factors from the periplasm. Acts as a molecular motor to provide the energy that is required for the export of proteins. The Hxc system is involved in the secretion of low-molecular-weight alkaline phosphatase L-AP (LapA). Is probably also involved in the secretion of the phosphate-binding protein PstS. This chain is Type II secretion system protein HxcR, found in Pseudomonas aeruginosa (strain ATCC 15692 / DSM 22644 / CIP 104116 / JCM 14847 / LMG 12228 / 1C / PRS 101 / PAO1).